Consider the following 134-residue polypeptide: Small ribosomal subunit protein uS11 (134 aa).

The disordered stretch occupies residues 114-134 (TPVPHNGTRPPRKWFKRQEKR). Over residues 123–134 (PPRKWFKRQEKR) the composition is skewed to basic residues.

It belongs to the universal ribosomal protein uS11 family. As to quaternary structure, part of the 30S ribosomal subunit. Interacts with proteins S7 and S18. Binds to IF-3.

Located on the platform of the 30S subunit, it bridges several disparate RNA helices of the 16S rRNA. Forms part of the Shine-Dalgarno cleft in the 70S ribosome. This Mesomycoplasma hyopneumoniae (strain J / ATCC 25934 / NCTC 10110) (Mycoplasma hyopneumoniae) protein is Small ribosomal subunit protein uS11.